Here is a 555-residue protein sequence, read N- to C-terminus: Glutamine--tRNA ligase (555 aa).

Residues proline 34–histidine 44 carry the 'HIGH' region motif. ATP-binding positions include glutamate 35–asparagine 37 and histidine 41–serine 47. Positions 67 and 212 each coordinate L-glutamine. ATP is bound by residues threonine 231, arginine 261–leucine 262, and methionine 269–lysine 271. Positions valine 268 to arginine 272 match the 'KMSKS' region motif. Residues threonine 317–glutamate 324 are interaction with tRNA.

Belongs to the class-I aminoacyl-tRNA synthetase family. In terms of assembly, monomer.

The protein localises to the cytoplasm. The enzyme catalyses tRNA(Gln) + L-glutamine + ATP = L-glutaminyl-tRNA(Gln) + AMP + diphosphate. This Salmonella agona (strain SL483) protein is Glutamine--tRNA ligase.